The chain runs to 123 residues: Probable histone H2B 4 (123 aa).

Positions 1–30 are disordered; it reads MPPKPSAKGAKKAAKTVVAKPKDGKKRRHA. Residue serine 110 is glycosylated (O-linked (GlcNAc) serine). A Glycyl lysine isopeptide (Lys-Gly) (interchain with G-Cter in ubiquitin) cross-link involves residue lysine 118.

This sequence belongs to the histone H2B family. As to quaternary structure, the nucleosome is a histone octamer containing two molecules each of H2A, H2B, H3 and H4 assembled in one H3-H4 heterotetramer and two H2A-H2B heterodimers. The octamer wraps approximately 147 bp of DNA. In terms of processing, monoubiquitination of Lys-118 gives a specific tag for epigenetic transcriptional activation and is also prerequisite for histone H3 'Lys-4' and 'Lys-79' methylation. Post-translationally, glcNAcylation at Ser-110 promotes monoubiquitination of Lys-118. It fluctuates in response to extracellular glucose, and associates with transcribed genes.

It localises to the nucleus. The protein localises to the chromosome. Its function is as follows. Core component of nucleosome. Nucleosomes wrap and compact DNA into chromatin, limiting DNA accessibility to the cellular machineries which require DNA as a template. Histones thereby play a central role in transcription regulation, DNA repair, DNA replication and chromosomal stability. DNA accessibility is regulated via a complex set of post-translational modifications of histones, also called histone code, and nucleosome remodeling. The chain is Probable histone H2B 4 (his-48) from Caenorhabditis elegans.